Consider the following 453-residue polypeptide: MMDISPTCYGYIDDEQDLALVFQGVFNGNLRCIERRPYDAEKVELVNPGNIFVFNEEKSGIKRWTDGFSWSPSRISGKFLVYREYNRLGSTHDLPLHNVPEYNIFERAHRKYFYTGLLKKTFSLKFNMDPTDSTKLETFHLIAYYTEKDIHQGSLRRPSENPFFHKFRPSQKLLDALQKVAVGNGRSNPSKNNERGRTKAHNYKTRRSLSSSPSYCDLLSNYNNHPGNIPVRTAVQLPLTTFNNAPREMHQQQHRQQQQYLLPIDEQNKLPLPYMQHQPQPIGVYNPNYQPGLRRTVSQPMIFCNTYNTLPQQPTAAPYERRGVSPSVIYSSNTLSPIPYQNIDPYSSRSGPECNHSKAPIAPTMMPPVHHILVHDYRQPKPVTDSINPPNVNITTSTTNKNLDGIYILPAPRMNPPAQTQYQMIHAPDSMQHPPTFSKNNTSSNPKSHQYSK.

Disordered stretches follow at residues 183–210 (GNGR…RSLS) and 428–453 (PDSM…QYSK). Residues 198-207 (TKAHNYKTRR) are compositionally biased toward basic residues. Positions 433 to 453 (HPPTFSKNNTSSNPKSHQYSK) are enriched in polar residues.

This is an uncharacterized protein from Saccharomyces cerevisiae (strain ATCC 204508 / S288c) (Baker's yeast).